A 503-amino-acid polypeptide reads, in one-letter code: Glycerol kinase (503 aa).

Threonine 14 is a binding site for ADP. Positions 14, 15, and 16 each coordinate ATP. Threonine 14 provides a ligand contact to sn-glycerol 3-phosphate. Arginine 18 is a binding site for ADP. Sn-glycerol 3-phosphate contacts are provided by arginine 84, glutamate 85, tyrosine 136, and aspartate 246. Glycerol-binding residues include arginine 84, glutamate 85, tyrosine 136, aspartate 246, and glutamine 247. Threonine 268 and glycine 311 together coordinate ADP. Residues threonine 268, glycine 311, glutamine 315, and glycine 412 each contribute to the ATP site. The ADP site is built by glycine 412 and asparagine 416.

The protein belongs to the FGGY kinase family. Homotetramer and homodimer (in equilibrium). Heterodimer with EIIA-Glc. Binds 1 zinc ion per glycerol kinase EIIA-Glc dimer. The zinc ion is important for dimerization.

It catalyses the reaction glycerol + ATP = sn-glycerol 3-phosphate + ADP + H(+). Its pathway is polyol metabolism; glycerol degradation via glycerol kinase pathway; sn-glycerol 3-phosphate from glycerol: step 1/1. With respect to regulation, activity of this regulatory enzyme is affected by several metabolites. Allosterically and non-competitively inhibited by fructose 1,6-bisphosphate (FBP) and unphosphorylated phosphocarrier protein EIIA-Glc (III-Glc), an integral component of the bacterial phosphotransferase (PTS) system. In terms of biological role, key enzyme in the regulation of glycerol uptake and metabolism. Catalyzes the phosphorylation of glycerol to yield sn-glycerol 3-phosphate. The protein is Glycerol kinase of Klebsiella pneumoniae (strain 342).